The chain runs to 158 residues: MPIATVCTWPAETEGGSTVVAADHASNYARKLGIQRDQLIQEWGWDEDTDDDIRAAIEEACGGELLDEDTDEVIDVVLLWWRDGDGDLVDTLMDAIGPLAEDGVIWVVTPKTGQPGHVLPAEIAEAAPTAGLMPTSSVNLGNWSASRLVQPKSRAGKR.

This is an uncharacterized protein from Mycobacterium tuberculosis (strain CDC 1551 / Oshkosh).